Reading from the N-terminus, the 471-residue chain is Adenosylhomocysteinase (471 aa).

Residues Thr60, Asp135, and Glu196 each coordinate substrate. Residue 197 to 199 (TTT) coordinates NAD(+). Substrate is bound by residues Lys226 and Asp230. NAD(+) is bound by residues Asn231, 260-265 (GYGDVG), Glu283, Asn318, 339-341 (IGH), and Asn387.

The protein belongs to the adenosylhomocysteinase family. NAD(+) is required as a cofactor.

The protein resides in the cytoplasm. It carries out the reaction S-adenosyl-L-homocysteine + H2O = L-homocysteine + adenosine. It participates in amino-acid biosynthesis; L-homocysteine biosynthesis; L-homocysteine from S-adenosyl-L-homocysteine: step 1/1. Its function is as follows. May play a key role in the regulation of the intracellular concentration of adenosylhomocysteine. The polypeptide is Adenosylhomocysteinase (Chlorobium phaeovibrioides (strain DSM 265 / 1930) (Prosthecochloris vibrioformis (strain DSM 265))).